We begin with the raw amino-acid sequence, 383 residues long: Queuine tRNA-ribosyltransferase (383 aa).

Residue Asp-92 is the Proton acceptor of the active site. Substrate is bound by residues Asp-92–Phe-96, Asp-146, Gln-190, and Gly-217. The interval Gly-248–Asp-254 is RNA binding. Asp-267 serves as the catalytic Nucleophile. Residues Thr-272 to Arg-276 are RNA binding; important for wobble base 34 recognition. Cys-310, Cys-312, Cys-315, and His-341 together coordinate Zn(2+).

It belongs to the queuine tRNA-ribosyltransferase family. In terms of assembly, homodimer. Within each dimer, one monomer is responsible for RNA recognition and catalysis, while the other monomer binds to the replacement base PreQ1. Zn(2+) is required as a cofactor.

The enzyme catalyses 7-aminomethyl-7-carbaguanine + guanosine(34) in tRNA = 7-aminomethyl-7-carbaguanosine(34) in tRNA + guanine. It participates in tRNA modification; tRNA-queuosine biosynthesis. In terms of biological role, catalyzes the base-exchange of a guanine (G) residue with the queuine precursor 7-aminomethyl-7-deazaguanine (PreQ1) at position 34 (anticodon wobble position) in tRNAs with GU(N) anticodons (tRNA-Asp, -Asn, -His and -Tyr). Catalysis occurs through a double-displacement mechanism. The nucleophile active site attacks the C1' of nucleotide 34 to detach the guanine base from the RNA, forming a covalent enzyme-RNA intermediate. The proton acceptor active site deprotonates the incoming PreQ1, allowing a nucleophilic attack on the C1' of the ribose to form the product. After dissociation, two additional enzymatic reactions on the tRNA convert PreQ1 to queuine (Q), resulting in the hypermodified nucleoside queuosine (7-(((4,5-cis-dihydroxy-2-cyclopenten-1-yl)amino)methyl)-7-deazaguanosine). The chain is Queuine tRNA-ribosyltransferase from Psychrobacter cryohalolentis (strain ATCC BAA-1226 / DSM 17306 / VKM B-2378 / K5).